Here is a 134-residue protein sequence, read N- to C-terminus: UPF0299 membrane protein KPK_1586 (134 aa).

A run of 4 helical transmembrane segments spans residues 5-25, 26-46, 66-86, and 93-113; these read LTIIWQYLRAFVLIYACLYAG, IFIAGLLPITIPGSIIGMLIL, ILIRYMALLFVPIGVGVMQYW, and LGPVVISCAISTLVVFVVVSW.

Belongs to the UPF0299 family.

It is found in the cell inner membrane. The polypeptide is UPF0299 membrane protein KPK_1586 (Klebsiella pneumoniae (strain 342)).